Consider the following 386-residue polypeptide: Phosphate acyltransferase (386 aa).

Residues 359–386 (PHRARQDELGENKVVGADQSMTAKATGT) are disordered. Over residues 377–386 (QSMTAKATGT) the composition is skewed to polar residues.

This sequence belongs to the PlsX family. Homodimer. Probably interacts with PlsY.

It localises to the cytoplasm. The catalysed reaction is a fatty acyl-[ACP] + phosphate = an acyl phosphate + holo-[ACP]. It participates in lipid metabolism; phospholipid metabolism. Functionally, catalyzes the reversible formation of acyl-phosphate (acyl-PO(4)) from acyl-[acyl-carrier-protein] (acyl-ACP). This enzyme utilizes acyl-ACP as fatty acyl donor, but not acyl-CoA. This Beijerinckia indica subsp. indica (strain ATCC 9039 / DSM 1715 / NCIMB 8712) protein is Phosphate acyltransferase.